Consider the following 101-residue polypeptide: Large ribosomal subunit protein uL24 (101 aa).

Belongs to the universal ribosomal protein uL24 family. In terms of assembly, part of the 50S ribosomal subunit.

Its function is as follows. One of two assembly initiator proteins, it binds directly to the 5'-end of the 23S rRNA, where it nucleates assembly of the 50S subunit. One of the proteins that surrounds the polypeptide exit tunnel on the outside of the subunit. This chain is Large ribosomal subunit protein uL24, found in Borrelia hermsii (strain HS1 / DAH).